The sequence spans 188 residues: Elongation factor P (188 aa).

Belongs to the elongation factor P family.

Its subcellular location is the cytoplasm. It functions in the pathway protein biosynthesis; polypeptide chain elongation. Its function is as follows. Involved in peptide bond synthesis. Stimulates efficient translation and peptide-bond synthesis on native or reconstituted 70S ribosomes in vitro. Probably functions indirectly by altering the affinity of the ribosome for aminoacyl-tRNA, thus increasing their reactivity as acceptors for peptidyl transferase. In Rhodopseudomonas palustris (strain ATCC BAA-98 / CGA009), this protein is Elongation factor P.